The chain runs to 276 residues: Rhomboid protease GlpG (276 aa).

The next 6 helical transmembrane spans lie at 94–114 (GPVTWVVMIACVVVFIAMQIL), 142–162 (ALMHFSLMHILFNLLWWWYLG), 169–189 (LGSGKLIVITLISALLSGYVQ), 192–212 (FSGPWFGGLSGVVYALMGYVW), 229–249 (LIIFALIWIIAGWFDLFGMSM), and 250–270 (ANGAHIAGLAVGLAMAFVDSL). Ser201 (nucleophile) is an active-site residue. Residue His254 is part of the active site.

It belongs to the peptidase S54 family.

It localises to the cell inner membrane. It carries out the reaction Cleaves type-1 transmembrane domains using a catalytic dyad composed of serine and histidine that are contributed by different transmembrane domains.. In terms of biological role, rhomboid-type serine protease that catalyzes intramembrane proteolysis. The polypeptide is Rhomboid protease GlpG (Shigella boydii serotype 4 (strain Sb227)).